Consider the following 232-residue polypeptide: Large ribosomal subunit protein uL1 (232 aa).

Belongs to the universal ribosomal protein uL1 family. In terms of assembly, part of the 50S ribosomal subunit.

Binds directly to 23S rRNA. The L1 stalk is quite mobile in the ribosome, and is involved in E site tRNA release. Functionally, protein L1 is also a translational repressor protein, it controls the translation of the L11 operon by binding to its mRNA. The protein is Large ribosomal subunit protein uL1 of Christiangramia forsetii (strain DSM 17595 / CGMCC 1.15422 / KT0803) (Gramella forsetii).